A 427-amino-acid chain; its full sequence is MESLTLQPIARVDGTINLPGSKSVSNRALLLAALANGTTVLTNLLDSDDVRHMLNALKALGVQFMLSDDRTRCEVVGNGGALKSATELELFLGNAGTAMRPLAAALCLGSNDIVLTGEPRMKERPIGHLVDALRQGGAQIDYLEQKNYPPVRLRGGFTGGNVEVDGSVSSQFLTALLMTAPLAPQDTVISIKGDLVSKPYIDITLHLMKTFGVEVENQAYQRFVVRGAQQYQSPGNYLVEGDASSASYFLAAGAIKGGTVKVTGIGRNSVQGDIRFADVLEKMGAVVTWGDDFISCTQGELNAVDMDMNHIPDAAMTIATAALFAKGTTTLRNIYNWRVKETDRLFAMATELRKVGAQVEEGEDYIRVTPPAKLQVAEIGTYNDHRMAMCFSLVALSDTPVTILDPKCTAKTFPDYFEQLARISTLA.

Positions 22, 23, and 27 each coordinate 3-phosphoshikimate. Phosphoenolpyruvate is bound at residue lysine 22. Phosphoenolpyruvate-binding residues include glycine 96 and arginine 124. Serine 169, serine 170, glutamine 171, serine 197, aspartate 313, asparagine 336, and lysine 340 together coordinate 3-phosphoshikimate. Glutamine 171 lines the phosphoenolpyruvate pocket. The active-site Proton acceptor is the aspartate 313. Phosphoenolpyruvate contacts are provided by arginine 344, arginine 386, and lysine 411.

It belongs to the EPSP synthase family. As to quaternary structure, monomer.

The protein localises to the cytoplasm. The enzyme catalyses 3-phosphoshikimate + phosphoenolpyruvate = 5-O-(1-carboxyvinyl)-3-phosphoshikimate + phosphate. It functions in the pathway metabolic intermediate biosynthesis; chorismate biosynthesis; chorismate from D-erythrose 4-phosphate and phosphoenolpyruvate: step 6/7. In terms of biological role, catalyzes the transfer of the enolpyruvyl moiety of phosphoenolpyruvate (PEP) to the 5-hydroxyl of shikimate-3-phosphate (S3P) to produce enolpyruvyl shikimate-3-phosphate and inorganic phosphate. In Enterobacter sp. (strain 638), this protein is 3-phosphoshikimate 1-carboxyvinyltransferase.